The sequence spans 331 residues: MSNITSASAAQIDHASSWNFRFAVFCSQLSIISTFILSVIAVKWIFTKSTFQTSTKIILVFNFVYANIHQFMYAIISLGMAYKGIFLLDETCEWLITEKDCLLYTEVLYVGISGMIYSQTGILIERAFATLYRNYTAKISRLVGIIISTFVLIMSIATYQIIISDDPLEGVVLSCFVPAQHSAQRANTFLFIALILTFVNLISSAAVMFYNKRLEYSIRYKVRERFKKREAIYSTHTICVVCMAQFVTMLVYSSGVLILRCNMSNILLTTFYKLITWVYTVQYNALLFPLILIFRIRATKLSRTKKIQDITSANQSQTEHYNQITSAWKIT.

A run of 7 helical transmembrane segments spans residues 22–42, 57–77, 104–124, 143–163, 189–209, 238–258, and 274–294; these read FAVFCSQLSIISTFILSVIAV, IILVFNFVYANIHQFMYAIIS, YTEVLYVGISGMIYSQTGILI, VGIIISTFVLIMSIATYQIII, FLFIALILTFVNLISSAAVMF, ICVVCMAQFVTMLVYSSGVLI, and LITWVYTVQYNALLFPLILIF.

The protein belongs to the nematode receptor-like protein sra family.

The protein resides in the membrane. The sequence is that of Serpentine receptor class alpha-1 (sra-1) from Caenorhabditis elegans.